A 90-amino-acid polypeptide reads, in one-letter code: Small ribosomal subunit protein bS16 (90 aa).

Belongs to the bacterial ribosomal protein bS16 family.

The sequence is that of Small ribosomal subunit protein bS16 from Bacillus pumilus (strain SAFR-032).